The chain runs to 101 residues: Urease subunit beta (101 aa).

It belongs to the urease beta subunit family. Heterotrimer of UreA (gamma), UreB (beta) and UreC (alpha) subunits. Three heterotrimers associate to form the active enzyme.

The protein resides in the cytoplasm. It carries out the reaction urea + 2 H2O + H(+) = hydrogencarbonate + 2 NH4(+). It functions in the pathway nitrogen metabolism; urea degradation; CO(2) and NH(3) from urea (urease route): step 1/1. The protein is Urease subunit beta of Burkholderia multivorans (strain ATCC 17616 / 249).